The chain runs to 342 residues: Putative aryl-alcohol dehydrogenase AAD16 (342 aa).

The protein belongs to the aldo/keto reductase family. Aldo/keto reductase 2 subfamily.

Functionally, putative aryl-alcohol dehydrogenase. In Saccharomyces cerevisiae (strain ATCC 204508 / S288c) (Baker's yeast), this protein is Putative aryl-alcohol dehydrogenase AAD16.